The primary structure comprises 397 residues: DNA-binding protein (397 aa).

Zn(2+) is bound by residues C116 and H118. The segment at 129 to 161 (IEMAATSESGVAALKEGRGAVEINRWGRQVVKI) is flexible loop. Residues C169, C185, C225, C227, C276, and C289 each contribute to the Zn(2+) site. Residues 335–397 (ALLPEGSVNE…IVLESSEEDE (63 aa)) form a C-terminal arm, DBP binding region. The disordered stretch occupies residues 338–397 (PEGSVNEDENPFGLDNSEDEEEVVPPSPPSPARKRTRTTVAEVHHKKKKKIVLESSEEDE). The span at 342–360 (VNEDENPFGLDNSEDEEEV) shows a compositional bias: acidic residues.

Belongs to the adenoviridae E2A DNA-binding protein family. Homomultimerizes on viral ssDNA bound to pTP. Forms a initiation complex with viral polymerase, pTP and hosts NFIA and POU2F1/OCT1. Interacts with host SRCAP.

Its subcellular location is the host nucleus. Functionally, plays a role in the elongation phase of viral strand displacement replication by unwinding the template in an ATP-independent fashion, employing its capacity to form multimers. Also enhances the rate of initiation. Released from template upon second strand synthesis. Assembles in complex with viral pTP, viral pol, host NFIA and host POU2F1/OCT1 on viral origin of replication. Covers the whole ssDNA genome during synthesis. The complementary strand synthesis induces its relese from DNA template. May inhibit cellular transcription mediated by the interaction between host SRCAP and CBP. In Snake adenovirus serotype 1 (SnAdV-1), this protein is DNA-binding protein.